A 388-amino-acid polypeptide reads, in one-letter code: RNA binding motif protein, X-linked-like-1 (388 aa).

The 79-residue stretch at 8–86 (GKLFIGGLNT…KAIKVEQATK (79 aa)) folds into the RRM domain. Positions 61–80 (DAKDVARDMNGKSLDGKAIK) are enriched in basic and acidic residues. The interval 61–388 (DAKDVARDMN…SDRGGGQKQI (328 aa)) is disordered. A Glycyl lysine isopeptide (Lys-Gly) (interchain with G-Cter in SUMO2) cross-link involves residue K80. At S88 the chain carries Phosphoserine. The span at 148–161 (RGPPPRSGGPPPKR) shows a compositional bias: pro residues. Composition is skewed to basic and acidic residues over residues 191–212 (PRRE…DGYS) and 238–271 (YTYR…EYSD). The segment covering 320-332 (SRDSYSSSRSDLY) has biased composition (low complexity). Composition is skewed to basic and acidic residues over residues 333-344 (SSDRDRVGRQER) and 377-388 (SRSDRGGGQKQI).

The protein resides in the nucleus. Functionally, RNA-binding protein which may be involved in pre-mRNA splicing. This is RNA binding motif protein, X-linked-like-1 (Rbmxl1) from Rattus norvegicus (Rat).